A 403-amino-acid chain; its full sequence is F-box/kelch-repeat protein At5g39560 (403 aa).

Residues Pro-26–Arg-72 enclose the F-box domain. 4 Kelch repeats span residues Glu-138–Gln-182, Ile-184–Asn-229, Asn-248–Val-294, and Tyr-296–Gly-340.

The polypeptide is F-box/kelch-repeat protein At5g39560 (Arabidopsis thaliana (Mouse-ear cress)).